A 447-amino-acid chain; its full sequence is Chorismate synthase, chloroplastic (447 aa).

The segment at 1 to 24 (MASSLSTKPFLSGSRRRSTTDGSG) is disordered. The transit peptide at 1 to 57 (MASSLSTKPFLSGSRRRSTTDGSGWSYFQTSDLRQLSNQSVQISVRRQTAPLKLVVQ) directs the protein to the chloroplast.

This sequence belongs to the chorismate synthase family. Homotetramer. The cofactor is FMNH2. In terms of processing, the N-terminus is blocked.

It is found in the plastid. The protein resides in the chloroplast. The catalysed reaction is 5-O-(1-carboxyvinyl)-3-phosphoshikimate = chorismate + phosphate. It functions in the pathway metabolic intermediate biosynthesis; chorismate biosynthesis; chorismate from D-erythrose 4-phosphate and phosphoenolpyruvate: step 7/7. Catalyzes the last common step of the biosynthesis of aromatic amino acids, produced via the shikimic acid pathway. In Capnoides sempervirens (Rock-harlequin), this protein is Chorismate synthase, chloroplastic.